A 36-amino-acid chain; its full sequence is Photosystem I reaction center subunit VIII (36 aa).

Residues 6 to 28 traverse the membrane as a helical segment; it reads LPSIFVPXVGLVFPAIAMASXFL.

Belongs to the PsaI family.

The protein resides in the plastid. The protein localises to the chloroplast thylakoid membrane. In terms of biological role, may help in the organization of the PsaL subunit. In Acorus gramineus (Dwarf sweet flag), this protein is Photosystem I reaction center subunit VIII.